A 347-amino-acid chain; its full sequence is Eukaryotic translation initiation factor 3 subunit H (347 aa).

Residues M1–F142 form the MPN domain.

The protein belongs to the eIF-3 subunit H family. In terms of assembly, component of the eukaryotic translation initiation factor 3 (eIF-3) complex.

It localises to the cytoplasm. In terms of biological role, component of the eukaryotic translation initiation factor 3 (eIF-3) complex, which is involved in protein synthesis of a specialized repertoire of mRNAs and, together with other initiation factors, stimulates binding of mRNA and methionyl-tRNAi to the 40S ribosome. The eIF-3 complex specifically targets and initiates translation of a subset of mRNAs involved in cell proliferation. The polypeptide is Eukaryotic translation initiation factor 3 subunit H (Neosartorya fischeri (strain ATCC 1020 / DSM 3700 / CBS 544.65 / FGSC A1164 / JCM 1740 / NRRL 181 / WB 181) (Aspergillus fischerianus)).